Here is a 344-residue protein sequence, read N- to C-terminus: Anthranilate phosphoribosyltransferase 2 (344 aa).

5-phospho-alpha-D-ribose 1-diphosphate-binding positions include Gly81, 84–85, Thr89, 91–94, 109–117, and Ala121; these read GD, NIST, and KHGNRALSS. Anthranilate is bound at residue Gly81. Ser93 serves as a coordination point for Mg(2+). Asn112 contacts anthranilate. Residue Arg167 participates in anthranilate binding. Mg(2+) contacts are provided by Asp226 and Glu227.

It belongs to the anthranilate phosphoribosyltransferase family. In terms of assembly, homodimer. Mg(2+) is required as a cofactor.

It catalyses the reaction N-(5-phospho-beta-D-ribosyl)anthranilate + diphosphate = 5-phospho-alpha-D-ribose 1-diphosphate + anthranilate. It participates in amino-acid biosynthesis; L-tryptophan biosynthesis; L-tryptophan from chorismate: step 2/5. Catalyzes the transfer of the phosphoribosyl group of 5-phosphorylribose-1-pyrophosphate (PRPP) to anthranilate to yield N-(5'-phosphoribosyl)-anthranilate (PRA). In Ralstonia nicotianae (strain ATCC BAA-1114 / GMI1000) (Ralstonia solanacearum), this protein is Anthranilate phosphoribosyltransferase 2.